A 110-amino-acid chain; its full sequence is MFSKDGLNNLMQHAQKIQEQMKKIQQEVSEIEVTGESGAGAVKVTLIGSHYCKKIELDKNTILEHDKEILEDLITAAFNDAVRKISDLQKQKMSSISSEMKFSNNLNLPF.

Belongs to the YbaB/EbfC family. Homodimer.

The protein localises to the cytoplasm. It is found in the nucleoid. Functionally, binds to DNA and alters its conformation. May be involved in regulation of gene expression, nucleoid organization and DNA protection. In Buchnera aphidicola subsp. Baizongia pistaciae (strain Bp), this protein is Nucleoid-associated protein bbp_426.